A 532-amino-acid polypeptide reads, in one-letter code: Glucose-6-phosphate isomerase (532 aa).

The active-site Proton donor is Glu-322. Residues His-351 and Lys-457 contribute to the active site.

The protein belongs to the GPI family.

It localises to the cytoplasm. The enzyme catalyses alpha-D-glucose 6-phosphate = beta-D-fructose 6-phosphate. Its pathway is carbohydrate biosynthesis; gluconeogenesis. It functions in the pathway carbohydrate degradation; glycolysis; D-glyceraldehyde 3-phosphate and glycerone phosphate from D-glucose: step 2/4. Its function is as follows. Catalyzes the reversible isomerization of glucose-6-phosphate to fructose-6-phosphate. The chain is Glucose-6-phosphate isomerase from Synechococcus sp. (strain JA-2-3B'a(2-13)) (Cyanobacteria bacterium Yellowstone B-Prime).